The chain runs to 378 residues: Signal recognition particle receptor FtsY (378 aa).

Residues 184-191, 266-270, and 330-333 each bind GTP; these read GVNGTGKT, DTAGR, and TKLD.

This sequence belongs to the GTP-binding SRP family. FtsY subfamily. As to quaternary structure, part of the signal recognition particle protein translocation system, which is composed of SRP and FtsY. SRP is a ribonucleoprotein composed of Ffh and a 4.5S RNA molecule.

The protein resides in the cell membrane. The protein localises to the cytoplasm. It catalyses the reaction GTP + H2O = GDP + phosphate + H(+). Its function is as follows. Involved in targeting and insertion of nascent membrane proteins into the cytoplasmic membrane. Acts as a receptor for the complex formed by the signal recognition particle (SRP) and the ribosome-nascent chain (RNC). Interaction with SRP-RNC leads to the transfer of the RNC complex to the Sec translocase for insertion into the membrane, the hydrolysis of GTP by both Ffh and FtsY, and the dissociation of the SRP-FtsY complex into the individual components. This Buchnera aphidicola subsp. Acyrthosiphon pisum (strain APS) (Acyrthosiphon pisum symbiotic bacterium) protein is Signal recognition particle receptor FtsY.